A 223-amino-acid chain; its full sequence is MRLVIAQCTVDYVGRLTAHLPSARRLLLFKADGSVSVHADDRAYKPLNWMSPPCWIVEPTDGDATVWVVENKAGEQLRITVEAIEHDSSHELGVDPGLVKDGVEAHLQALLAEHVELLGAGYTLVRREYMTPIGPVDLLCRDEQGRSVAVEIKRRGEIDGVEQLTRYLELLNRDSLLAPVAGVFAAQQIKPQARTLATDRGIRCLTLDYDKMRGMDNDEFRLF.

This sequence belongs to the NucS endonuclease family.

It localises to the cytoplasm. Functionally, cleaves both 3' and 5' ssDNA extremities of branched DNA structures. In Mycolicibacterium vanbaalenii (strain DSM 7251 / JCM 13017 / BCRC 16820 / KCTC 9966 / NRRL B-24157 / PYR-1) (Mycobacterium vanbaalenii), this protein is Endonuclease NucS.